We begin with the raw amino-acid sequence, 382 residues long: 4-hydroxybutyrate dehydrogenase (382 aa).

NAD(+) is bound by residues Asp-37, Asn-67, 94–98 (GSSID), 138–142 (TTSGT), and Lys-159. Asp-193, His-197, His-261, and His-280 together coordinate Fe cation. Residue His-280 participates in NAD(+) binding.

It belongs to the iron-containing alcohol dehydrogenase family. Fe cation is required as a cofactor.

It catalyses the reaction 4-hydroxybutanoate + NAD(+) = succinate semialdehyde + NADH + H(+). Its activity is regulated as follows. Shows competitive inhibition of GHBDH activity by the product succinic semialdehyde, and non-competitive inhibitions by the three other substrate-product combinations. The conversion of GHB to SSA is activated by two different saturating purified nudix hydrolases, B.methanolicus activator ACT and E.coli NudF. The nudix hydrolases do not activate the reverse reaction. Functionally, involved in the degradation of 4-hydroxybutyrate. Catalyzes the interconversion of gamma-hydroxybutyrate (GHB) and succinic semialdehyde (SSA). This is 4-hydroxybutyrate dehydrogenase from Cupriavidus necator (Alcaligenes eutrophus).